The sequence spans 386 residues: Ovalbumin (386 aa).

The residue at position 2 (Gly2) is an N-acetylglycine. The not cleaved signal peptide spans 22-48 (HHANENIFYCPIAIMSALAMVYLGAKD). A Phosphoserine modification is found at Ser69. An intrachain disulfide couples Cys74 to Cys121. Position 192 (Glu192) interacts with Ca(2+). The N-linked (GlcNAc...) asparagine glycan is linked to Asn293. Ser345 carries the phosphoserine modification.

It belongs to the serpin family. Ov-serpin subfamily. In terms of assembly, homodimer. In terms of processing, undergoes proteolytic cleavage first at the canonical P1-P1' site, and then at the P8-P7 site by subtilisin. As to expression, major protein of egg white. Expressed in the magnum of the oviduct (at protein level).

Its subcellular location is the secreted. Its function is as follows. Non-inhibitory serpin. Storage protein of egg white. The sequence is that of Ovalbumin (SERPINB14) from Gallus gallus (Chicken).